A 254-amino-acid chain; its full sequence is Imidazole glycerol phosphate synthase subunit HisF (254 aa).

Catalysis depends on residues D12 and D131.

It belongs to the HisA/HisF family. As to quaternary structure, heterodimer of HisH and HisF.

It localises to the cytoplasm. It catalyses the reaction 5-[(5-phospho-1-deoxy-D-ribulos-1-ylimino)methylamino]-1-(5-phospho-beta-D-ribosyl)imidazole-4-carboxamide + L-glutamine = D-erythro-1-(imidazol-4-yl)glycerol 3-phosphate + 5-amino-1-(5-phospho-beta-D-ribosyl)imidazole-4-carboxamide + L-glutamate + H(+). The protein operates within amino-acid biosynthesis; L-histidine biosynthesis; L-histidine from 5-phospho-alpha-D-ribose 1-diphosphate: step 5/9. In terms of biological role, IGPS catalyzes the conversion of PRFAR and glutamine to IGP, AICAR and glutamate. The HisF subunit catalyzes the cyclization activity that produces IGP and AICAR from PRFAR using the ammonia provided by the HisH subunit. The polypeptide is Imidazole glycerol phosphate synthase subunit HisF (Herminiimonas arsenicoxydans).